A 331-amino-acid chain; its full sequence is Eukaryotic translation initiation factor 2 subunit 2 (331 aa).

2 disordered regions span residues 1–75 and 97–120; these read MSGD…DLNF and AIKDVKIESDAQEPAEPEDDLDIM. The residue at position 2 (Ser-2) is an N-acetylserine. 2 positions are modified to phosphoserine: Ser-2 and Ser-13. Residues 13–22 show a composition bias toward basic residues; it reads SKKKKKKKKP. Thr-36 is modified (phosphothreonine). A compositionally biased stretch (basic and acidic residues) spans 40–51; it reads ETKEVEPEPTEE. A Phosphoserine modification is found at Ser-67. A Glycyl lysine isopeptide (Lys-Gly) (interchain with G-Cter in SUMO2) cross-link involves residue Lys-102. The residue at position 105 (Ser-105) is a Phosphoserine. Over residues 106 to 118 the composition is skewed to acidic residues; sequence DAQEPAEPEDDLD. Ser-158 and Ser-216 each carry phosphoserine. An N6-acetyllysine mark is found at Lys-263 and Lys-291. The segment at 279-303 adopts a C4-type zinc-finger fold; it reads CHTCRSPDTILQKDTRLYFLQCETC.

The protein belongs to the eIF-2-beta/eIF-5 family. In terms of assembly, eukaryotic translation initiation factor 2 eIF2 is a heterotrimeric complex composed of an alpha (EIF2S1), a beta (EIF2S2) and a gamma (EIF2S3) chain. eIF2 is member of the 43S pre-initiation complex (43S PIC). eIF2 forms a complex with at least CELF1/CUGBP1, CALR, CALR3, EIF2S1, EIF2S2, HSP90B1 and HSPA5. Interacts with BZW2/5MP1. Interacts with EIF5.

It localises to the cytoplasm. The protein localises to the cytosol. In terms of biological role, component of the eIF2 complex that functions in the early steps of protein synthesis by forming a ternary complex with GTP and initiator tRNA. This complex binds to a 40S ribosomal subunit, followed by mRNA binding to form the 43S pre-initiation complex (43S PIC). Junction of the 60S ribosomal subunit to form the 80S initiation complex is preceded by hydrolysis of the GTP bound to eIF2 and release of an eIF2-GDP binary complex. In order for eIF2 to recycle and catalyze another round of initiation, the GDP bound to eIF2 must exchange with GTP by way of a reaction catalyzed by eIF2B. This Mus musculus (Mouse) protein is Eukaryotic translation initiation factor 2 subunit 2 (Eif2s2).